Here is a 180-residue protein sequence, read N- to C-terminus: Hypoxanthine-guanine phosphoribosyltransferase (180 aa).

2 residues coordinate diphosphate: lysine 43 and glycine 44. Positions 99 and 100 each coordinate Mg(2+). The active-site Proton acceptor is aspartate 103. Residues lysine 131, 152–153 (FV), and aspartate 159 contribute to the GMP site. Arginine 165 provides a ligand contact to diphosphate.

It belongs to the purine/pyrimidine phosphoribosyltransferase family. Mg(2+) serves as cofactor.

It is found in the cytoplasm. The enzyme catalyses IMP + diphosphate = hypoxanthine + 5-phospho-alpha-D-ribose 1-diphosphate. The catalysed reaction is GMP + diphosphate = guanine + 5-phospho-alpha-D-ribose 1-diphosphate. It participates in purine metabolism; IMP biosynthesis via salvage pathway; IMP from hypoxanthine: step 1/1. It functions in the pathway purine metabolism; GMP biosynthesis via salvage pathway; GMP from guanine: step 1/1. Purine salvage pathway enzyme that catalyzes the transfer of the ribosyl-5-phosphate group from 5-phospho-alpha-D-ribose 1-diphosphate (PRPP) to the N9 position of the 6-oxopurines hypoxanthine and guanine to form the corresponding ribonucleotides IMP (inosine 5'-monophosphate) and GMP (guanosine 5'-monophosphate), with the release of PPi. The sequence is that of Hypoxanthine-guanine phosphoribosyltransferase (hprT) from Bacillus subtilis (strain 168).